Reading from the N-terminus, the 460-residue chain is DL-alanine permease SerP2 (460 aa).

The next 12 membrane-spanning stretches (helical) occupy residues 26–46 (LIAI…KSIH), 47–67 (LTGP…YILL), 98–118 (FIQW…LIAI), 124–144 (FWLP…LLTL), 160–180 (FGMI…ILIF), 209–229 (FFES…IGMT), 246–266 (QIPI…MSIY), 278–298 (FVTI…NFVV), 344–364 (ALLF…IPAI), 368–388 (FVFI…MTLI), 410–430 (HIFI…LFCF), and 433–453 (TIIP…FTFF).

Belongs to the amino acid-polyamine-organocation (APC) superfamily. Amino acid transporter (AAT) (TC 2.A.3.1) family.

It localises to the cell membrane. Functionally, transports DL-alanine, DL-serine and glycine. The preferred substrate is DL-alanine. L-serine is a low-affinity substrate. The protein is DL-alanine permease SerP2 of Lactococcus lactis subsp. cremoris (strain MG1363).